Consider the following 571-residue polypeptide: Proline--tRNA ligase (571 aa).

Belongs to the class-II aminoacyl-tRNA synthetase family. ProS type 1 subfamily. As to quaternary structure, homodimer.

The protein localises to the cytoplasm. The catalysed reaction is tRNA(Pro) + L-proline + ATP = L-prolyl-tRNA(Pro) + AMP + diphosphate. Catalyzes the attachment of proline to tRNA(Pro) in a two-step reaction: proline is first activated by ATP to form Pro-AMP and then transferred to the acceptor end of tRNA(Pro). As ProRS can inadvertently accommodate and process non-cognate amino acids such as alanine and cysteine, to avoid such errors it has two additional distinct editing activities against alanine. One activity is designated as 'pretransfer' editing and involves the tRNA(Pro)-independent hydrolysis of activated Ala-AMP. The other activity is designated 'posttransfer' editing and involves deacylation of mischarged Ala-tRNA(Pro). The misacylated Cys-tRNA(Pro) is not edited by ProRS. The chain is Proline--tRNA ligase from Aliivibrio salmonicida (strain LFI1238) (Vibrio salmonicida (strain LFI1238)).